An 892-amino-acid polypeptide reads, in one-letter code: MSSKRGADPDWKTPGKASKDKRPKTNAKKQKFRDEEYCKVCSDGGDLLCCDSCPSVYHRTCLSPPLKSIPKGDWICPRCIPLPGKAEKILSWRWALDRSVELRTSKGEKRREYFIKWHGMSYWHCEWIPEGQMLLHHASMVASFQRRSDMEEPSLEELDDQDGNLHERFYRYGIKPEWLLVQRVINHSEEPNGGTMYLVKWRELSYNDSSWERESDSIPGLNQAIALYKKLRSSNKGRQRDRPAPTIDLNKKYEDQPVFLKEAGLKLHPFQIEGVSWLRYSWGQGIPTILADEMGLGKTIQTVVFLYSLFKEGHCRGPFLISVPLSTLTNWERELELWAPELYCVTYVGGKTARAVIRKHEISFEEVTTKTMRENQTQYKFNVMLTSYEFISVDAAFLGCIDWAALVVDEAHRLRSNQSKFFRILSKYRIGYKLLLTGTPLQNNLEELFHLLNFLSSGKFNDLQTFQAEFTDVSKEEQVKRLHEILEPHMLRRLKADVLKSMPPKSEFIVRVELSSMQKKFYKHILTKNFKALNQKGGGRVCSLLNIMMDLRKCCNHPYLFPSAAEEATISPSGLYEMSSLTKASGKLDLLSKMLKQLKADNHRVLLFSQMTKMLNVLEHFLEGEGYQYDRIDGSIKGDLRQKAIDRFNDPVSEHFVFLLSTRAGGLGINLATADTVIIFDSDWNPHNDVQAFSRAHRMGQKKKVMIYRFVTHNSVEERIMQVAKHKMMLTHLVVRPGMGGMTTNFSKDELEDILRFGTEDLFKDGKSEAIHYDDKAVADLLDRTNRGIEEKESWANEYLSSFKVASYATKEDHEEHDDYNNDAENTDPFYWENLMGKSQPKLPKKQKKQSQQSQVDVESIMGKGKRIRKEIDYSNQYPSPNRATPSSIVLM.

The segment covering 1-20 (MSSKRGADPDWKTPGKASKD) has biased composition (basic and acidic residues). The segment at 1-29 (MSSKRGADPDWKTPGKASKDKRPKTNAKK) is disordered. The PHD-type zinc-finger motif lies at 35-82 (EEYCKVCSDGGDLLCCDSCPSVYHRTCLSPPLKSIPKGDWICPRCIPL). 2 consecutive Chromo domains span residues 84-156 (GKAE…PSLE) and 179-240 (LLVQ…GRQR). Residues 279–458 (RYSWGQGIPT…FHLLNFLSSG (180 aa)) form the Helicase ATP-binding domain. 292 to 299 (DEMGLGKT) is a binding site for ATP. Residues 409–412 (DEAH) carry the DEAH box motif. The Helicase C-terminal domain maps to 590–739 (LLSKMLKQLK…LTHLVVRPGM (150 aa)). The disordered stretch occupies residues 839-892 (SQPKLPKKQKKQSQQSQVDVESIMGKGKRIRKEIDYSNQYPSPNRATPSSIVLM). A compositionally biased stretch (polar residues) spans 874 to 892 (YSNQYPSPNRATPSSIVLM).

Belongs to the SNF2/RAD54 helicase family. As to quaternary structure, monomer.

It is found in the nucleus. The protein localises to the chromosome. It catalyses the reaction ATP + H2O = ADP + phosphate + H(+). ATPase activity is stimulated by binding to DNA or nucleosomes, but is strongly activated by nucleosomes. ATP-dependent chromatin-remodeling factor which acts in nucleosome-remodeling by catalyzing ATP-dependent nucleosome mobilization. Likely to be involved in the regulation of transcription. This chain is Chromodomain-helicase-DNA-binding protein 3, found in Drosophila melanogaster (Fruit fly).